The following is a 230-amino-acid chain: Cytidylate kinase (230 aa).

An ATP-binding site is contributed by 12–20 (GPSGAGKGT).

This sequence belongs to the cytidylate kinase family. Type 1 subfamily.

Its subcellular location is the cytoplasm. The catalysed reaction is CMP + ATP = CDP + ADP. It carries out the reaction dCMP + ATP = dCDP + ADP. This is Cytidylate kinase from Shewanella halifaxensis (strain HAW-EB4).